A 154-amino-acid chain; its full sequence is Large ribosomal subunit protein uL22c (154 aa).

Belongs to the universal ribosomal protein uL22 family. In terms of assembly, part of the 50S ribosomal subunit.

The protein localises to the plastid. It is found in the chloroplast. This protein binds specifically to 23S rRNA. In terms of biological role, the globular domain of the protein is located near the polypeptide exit tunnel on the outside of the subunit, while an extended beta-hairpin is found that lines the wall of the exit tunnel in the center of the 70S ribosome. The protein is Large ribosomal subunit protein uL22c (rpl22) of Platanus occidentalis (Sycamore).